A 926-amino-acid polypeptide reads, in one-letter code: OTU domain-containing protein 7A (926 aa).

Position 121 is a phosphoserine (serine 121). The interval 170 to 413 is TRAF-binding; it reads ERDLIEQATM…AVDPGKDWEW (244 aa). The segment at 185 to 452 is catalytic; it reads AGRLNWWSTV…VTWIRIPSET (268 aa). Residues 201–377 form the OTU domain; it reads LLPLATTGDG…QAHFSALVSM (177 aa). Aspartate 209 is a catalytic residue. Cysteine 212 serves as the catalytic Nucleophile. The Proton acceptor role is filled by histidine 370. Disordered stretches follow at residues 455–517, 540–615, and 671–779; these read PLAQ…DSVA, GLVH…GDAW, and EQEQ…ARQS. The segment covering 484–494 has biased composition (low complexity); sequence VCSNSNSNNGK. Residues 495–513 are compositionally biased toward basic and acidic residues; that stretch reads NGKDKEKEKQRKDKDKTRA. The Nuclear localization signal motif lies at 497–512; that stretch reads KDKEKEKQRKDKDKTR. 3 stretches are compositionally biased toward low complexity: residues 579–595, 680–691, and 731–750; these read GASA…PSPT, AAAAAAATATAT, and SPGT…AASP. Gly residues predominate over residues 751-767; that stretch reads GPGGGARRAAPGTGGPT. Omega-N-methylarginine is present on arginine 880. The A20-type zinc finger occupies 884–919; sequence GPAQRRCQRENCAFYGRAETEHFCSYCYREELRRRR. Cysteine 890, cysteine 895, cysteine 907, and cysteine 910 together coordinate Zn(2+).

This sequence belongs to the peptidase C64 family.

The protein resides in the cytoplasm. The protein localises to the nucleus. The catalysed reaction is Thiol-dependent hydrolysis of ester, thioester, amide, peptide and isopeptide bonds formed by the C-terminal Gly of ubiquitin (a 76-residue protein attached to proteins as an intracellular targeting signal).. Its function is as follows. Deubiquitinase, which cleaves 'Lys-11'-linked polyubiquitin chains. This is OTU domain-containing protein 7A (Otud7a) from Mus musculus (Mouse).